Here is a 192-residue protein sequence, read N- to C-terminus: Ion-translocating oxidoreductase complex subunit A (192 aa).

The next 6 helical transmembrane spans lie at 5–25, 39–59, 72–92, 102–122, 134–154, and 171–191; these read LLLL…FLGL, IGMS…SYLV, LRTM…EMLV, ALGI…VALL, AIYG…FSAM, and AIAM…TGLV.

It belongs to the NqrDE/RnfAE family. The complex is composed of six subunits: RnfA, RnfB, RnfC, RnfD, RnfE and RnfG.

Its subcellular location is the cell inner membrane. Part of a membrane-bound complex that couples electron transfer with translocation of ions across the membrane. This chain is Ion-translocating oxidoreductase complex subunit A, found in Shewanella loihica (strain ATCC BAA-1088 / PV-4).